The sequence spans 375 residues: Trichodiene synthase (375 aa).

Belongs to the trichodiene synthase family.

The catalysed reaction is (2E,6E)-farnesyl diphosphate = trichodiene + diphosphate. It functions in the pathway sesquiterpene biosynthesis; trichothecene biosynthesis. TS is a member of the terpene cyclase group of enzymes. It catalyzes the isomerization and cyclization of farnesyl pyro-phosphate to form trichodiene, the first cyclic intermediate in the biosynthetic pathway for trichothecenes. It serves to branch trichothecene biosynthesis from the isoprenoid pathway. This is Trichodiene synthase (TRI5) from Fusarium asiaticum.